A 135-amino-acid chain; its full sequence is Large ribosomal subunit protein uL16c (135 aa).

Residues 1–20 (MLSPKRTRFRKQHRGRMKGK) are disordered.

It belongs to the universal ribosomal protein uL16 family. As to quaternary structure, part of the 50S ribosomal subunit.

It localises to the plastid. The protein resides in the chloroplast. The chain is Large ribosomal subunit protein uL16c from Landoltia punctata (Dotted duckmeat).